The chain runs to 217 residues: Orotidine 5'-phosphate decarboxylase (217 aa).

Residues Asp-14, Lys-36, 64 to 73 (DFKVADIPST), Ser-120, 172 to 182 (PGVGAQGGNLS), Gly-197, and Arg-198 contribute to the substrate site. Catalysis depends on Lys-66, which acts as the Proton donor.

Belongs to the OMP decarboxylase family. Type 1 subfamily. Homodimer.

The catalysed reaction is orotidine 5'-phosphate + H(+) = UMP + CO2. The protein operates within pyrimidine metabolism; UMP biosynthesis via de novo pathway; UMP from orotate: step 2/2. Its function is as follows. Catalyzes the decarboxylation of orotidine 5'-monophosphate (OMP) to uridine 5'-monophosphate (UMP). In Methanococcus maripaludis (strain C6 / ATCC BAA-1332), this protein is Orotidine 5'-phosphate decarboxylase.